Reading from the N-terminus, the 270-residue chain is Acetyl-coenzyme A carboxylase carboxyl transferase subunit beta (270 aa).

The CoA carboxyltransferase N-terminal domain occupies 16–270; it reads LFAKCPACKH…KLLAFHGGSK (255 aa). The Zn(2+) site is built by cysteine 20, cysteine 23, cysteine 38, and cysteine 41. The C4-type zinc-finger motif lies at 20–41; the sequence is CPACKHMIYQKDLGLEKICPKC.

It belongs to the AccD/PCCB family. As to quaternary structure, acetyl-CoA carboxylase is a heterohexamer composed of biotin carboxyl carrier protein (AccB), biotin carboxylase (AccC) and two subunits each of ACCase subunit alpha (AccA) and ACCase subunit beta (AccD). Zn(2+) serves as cofactor.

It is found in the cytoplasm. It carries out the reaction N(6)-carboxybiotinyl-L-lysyl-[protein] + acetyl-CoA = N(6)-biotinyl-L-lysyl-[protein] + malonyl-CoA. Its pathway is lipid metabolism; malonyl-CoA biosynthesis; malonyl-CoA from acetyl-CoA: step 1/1. Functionally, component of the acetyl coenzyme A carboxylase (ACC) complex. Biotin carboxylase (BC) catalyzes the carboxylation of biotin on its carrier protein (BCCP) and then the CO(2) group is transferred by the transcarboxylase to acetyl-CoA to form malonyl-CoA. This Streptococcus mutans serotype c (strain NN2025) protein is Acetyl-coenzyme A carboxylase carboxyl transferase subunit beta.